Consider the following 94-residue polypeptide: MRIGIFKHLKEMNNWRKTVYKKSPIEIVQALLAQGLTQSEIEANTGIKQPSISRILTGKNKDPRISTMVALEKLYLELATNSFSTSRLNKSKAK.

The region spanning 27–88 is the HTH cro/C1-type domain; that stretch reads IVQALLAQGL…ATNSFSTSRL (62 aa). The segment at residues 38–57 is a DNA-binding region (H-T-H motif); it reads QSEIEANTGIKQPSISRILT.

This Escherichia coli (Bacteriophage APSE-1) protein is Putative protein P2 (2).